The following is a 71-amino-acid chain: UPF0435 protein BPUM_0734 (71 aa).

Belongs to the UPF0435 family.

The polypeptide is UPF0435 protein BPUM_0734 (Bacillus pumilus (strain SAFR-032)).